We begin with the raw amino-acid sequence, 483 residues long: Regulatory protein ViaA (483 aa).

Belongs to the ViaA family. As to quaternary structure, homodimer. Interacts with RavA.

It localises to the cytoplasm. Component of the RavA-ViaA chaperone complex, which may act on the membrane to optimize the function of some of the respiratory chains. ViaA stimulates the ATPase activity of RavA. In Salmonella dublin (strain CT_02021853), this protein is Regulatory protein ViaA.